The sequence spans 216 residues: Ras-like protein (216 aa).

16 to 23 (GGGGVGKS) serves as a coordination point for GTP. An Effector region motif is present at residues 38–46 (YDPTIEDSY). GTP is bound by residues 63 to 67 (DTAGQ) and 122 to 125 (NKCD). S-palmitoyl cysteine attachment occurs at residues cysteine 209 and cysteine 210. Cysteine 213 is subject to Cysteine methyl ester. Cysteine 213 carries the S-geranylgeranyl cysteine lipid modification. Positions 214–216 (VVL) are cleaved as a propeptide — removed in mature form.

This sequence belongs to the small GTPase superfamily. Ras family.

Its subcellular location is the cell membrane. The catalysed reaction is GTP + H2O = GDP + phosphate + H(+). Its activity is regulated as follows. Alternates between an inactive form bound to GDP and an active form bound to GTP. Activated by a guanine nucleotide-exchange factor (GEF) and inactivated by a GTPase-activating protein (GAP). This is Ras-like protein (RAS1) from Cryptococcus neoformans var. neoformans serotype D (strain B-3501A) (Filobasidiella neoformans).